We begin with the raw amino-acid sequence, 293 residues long: Neugrin (293 aa).

A signal peptide spans 1–15 (MALSLSLFLGGRVRA). 2 disordered regions span residues 25 to 48 (QGVA…PEER) and 162 to 211 (PLSA…EKNK). Phosphoserine is present on serine 41. A glycan (N-linked (GlcNAc...) asparagine) is linked at asparagine 270.

Belongs to the neugrin family. As to quaternary structure, forms a regulatory protein-RNA complex, consisting of RCC1L, NGRN, RPUSD3, RPUSD4, TRUB2, FASTKD2 and 16S mt-rRNA. Interacts with 16S mt-rRNA; this interaction is direct.

Its subcellular location is the nucleus. It is found in the secreted. The protein localises to the mitochondrion membrane. Its function is as follows. Plays an essential role in mitochondrial ribosome biogenesis. As a component of a functional protein-RNA module, consisting of RCC1L, NGRN, RPUSD3, RPUSD4, TRUB2, FASTKD2 and 16S mitochondrial ribosomal RNA (16S mt-rRNA), controls 16S mt-rRNA abundance and is required for intra-mitochondrial translation of core subunits of the oxidative phosphorylation system. The chain is Neugrin (Ngrn) from Rattus norvegicus (Rat).